Here is a 225-residue protein sequence, read N- to C-terminus: Cytochrome c oxidase subunit 2 (225 aa).

Over 1–25 (MSTWFMFMFQESNSYYADNLISFHN) the chain is Mitochondrial intermembrane. The helical transmembrane segment at 26–47 (MVMMIIIMISTLTVYIILDLFM) threads the bilayer. At 48–62 (NKFSNLFLLKNHNIE) the chain is on the mitochondrial matrix side. The chain crosses the membrane as a helical span at residues 63–82 (IIWTIIPIIILLIICFPSLK). Residues 83-225 (ILYLIDEIVN…YFLNWVNKQI (143 aa)) lie on the Mitochondrial intermembrane side of the membrane. The Cu cation site is built by His159, Cys194, Glu196, Cys198, His202, and Met205. Position 196 (Glu196) interacts with Mg(2+).

This sequence belongs to the cytochrome c oxidase subunit 2 family. In terms of assembly, component of the cytochrome c oxidase (complex IV, CIV), a multisubunit enzyme composed of a catalytic core of 3 subunits and several supernumerary subunits. The complex exists as a monomer or a dimer and forms supercomplexes (SCs) in the inner mitochondrial membrane with ubiquinol-cytochrome c oxidoreductase (cytochrome b-c1 complex, complex III, CIII). Requires Cu cation as cofactor.

It is found in the mitochondrion inner membrane. The catalysed reaction is 4 Fe(II)-[cytochrome c] + O2 + 8 H(+)(in) = 4 Fe(III)-[cytochrome c] + 2 H2O + 4 H(+)(out). Component of the cytochrome c oxidase, the last enzyme in the mitochondrial electron transport chain which drives oxidative phosphorylation. The respiratory chain contains 3 multisubunit complexes succinate dehydrogenase (complex II, CII), ubiquinol-cytochrome c oxidoreductase (cytochrome b-c1 complex, complex III, CIII) and cytochrome c oxidase (complex IV, CIV), that cooperate to transfer electrons derived from NADH and succinate to molecular oxygen, creating an electrochemical gradient over the inner membrane that drives transmembrane transport and the ATP synthase. Cytochrome c oxidase is the component of the respiratory chain that catalyzes the reduction of oxygen to water. Electrons originating from reduced cytochrome c in the intermembrane space (IMS) are transferred via the dinuclear copper A center (CU(A)) of subunit 2 and heme A of subunit 1 to the active site in subunit 1, a binuclear center (BNC) formed by heme A3 and copper B (CU(B)). The BNC reduces molecular oxygen to 2 water molecules using 4 electrons from cytochrome c in the IMS and 4 protons from the mitochondrial matrix. In Apis mellifera ligustica (Common honeybee), this protein is Cytochrome c oxidase subunit 2 (COII).